The sequence spans 742 residues: Mechanosensitive ion channel protein 9 (742 aa).

Positions 1–117 (MAERRVSNGE…REENGGRSLR (117 aa)) are disordered. The segment covering 17–26 (SDKEDSKDPR) has biased composition (basic and acidic residues). Phosphoserine occurs at positions 28 and 36. The segment covering 105–117 (DSTREENGGRSLR) has biased composition (basic and acidic residues). Residues serine 142 and serine 145 each carry the phosphoserine modification. 6 consecutive transmembrane segments (helical) span residues 180–200 (AFLELVVFMAILGALIVSLTI), 221–241 (MVTLSGMLVTNWFMHFVVFII), 261–281 (NVQVFIWFSLVLIAWICLFDG), 292–312 (FLDFITWTIVSLLVGSILFLV), 524–544 (LITGILTVITFIVWMVLLDIA), and 559–579 (LAFMIGSTCKNIFESFMFVFV).

Belongs to the MscS (TC 1.A.23) family. In terms of tissue distribution, detected in the epidermis, cortex, and endodermis of the root tip.

The protein localises to the cell membrane. Functionally, mechanosensitive channel that opens in response to stretch forces in the membrane lipid bilayer. This is Mechanosensitive ion channel protein 9 (MSL9) from Arabidopsis thaliana (Mouse-ear cress).